The chain runs to 751 residues: Oxysterol-binding protein-related protein 11 (751 aa).

The residue at position 1 (M1) is an N-acetylmethionine. Residues 1 to 57 are disordered; sequence MQGGEPASVMKVSESEGKLEGLATAVTPNKNSGNSSCGGAISSSSSNSSRGGSAKGW. S15 carries the post-translational modification Phosphoserine. T27 carries the post-translational modification Phosphothreonine. Over residues 31–52 the composition is skewed to low complexity; sequence NSGNSSCGGAISSSSSNSSRGG. Positions 63–160 constitute a PH domain; sequence MESVNGYLMK…WVSRLQICTQ (98 aa). Phosphoserine occurs at positions 177, 179, 182, 186, 189, and 194. Disordered stretches follow at residues 475–497 and 694–716; these read SGVSSSSSTPAITDHAPLPEEAP and EIDKATEHKRSLEERQRTEERLR.

Belongs to the OSBP family. Heterodimer with OSBPL9.

It is found in the late endosome membrane. It localises to the golgi apparatus. Its subcellular location is the trans-Golgi network membrane. The catalysed reaction is a 1,2-diacyl-sn-glycero-3-phospho-(1D-myo-inositol 4-phosphate)(out) + a 1,2-diacyl-sn-glycero-3-phospho-L-serine(in) = a 1,2-diacyl-sn-glycero-3-phospho-(1D-myo-inositol 4-phosphate)(in) + a 1,2-diacyl-sn-glycero-3-phospho-L-serine(out). Functionally, plays a role in regulating ADIPOQ and FABP4 levels in differentiating adipocytes and is also involved in regulation of adipocyte triglyceride storage. Weakly binds 25-hydroxycholesterol. Interacts with OSBPL9 to function as lipid transfer proteins. Together they form a heterodimer that localizes at the ER-trans-Golgi membrane contact sites, and exchanges phosphatidylserine (1,2-diacyl-sn-glycero-3-phospho-L-serine, PS) for phosphatidylinositol-4-phosphate (1,2-diacyl-sn-glycero-3-phospho-(1D-myo-inositol 4-phosphate), PI(4)P) between the two organelles, a step that is critical for sphingomyelin synthesis in the Golgi complex. This Mus musculus (Mouse) protein is Oxysterol-binding protein-related protein 11 (Osbpl11).